The primary structure comprises 406 residues: Calsequestrin-2 (406 aa).

An N-terminal signal peptide occupies residues 1 to 19 (MKATCWILAGFCLLFCCKA). N-linked (GlcNAc...) asparagine glycosylation occurs at N335. The tract at residues 365–406 (VLSGKINTEDDDDDDDDDDDDDDDDDDDDDDDDDDDDDDDDD) is disordered. The span at 373–406 (EDDDDDDDDDDDDDDDDDDDDDDDDDDDDDDDDD) shows a compositional bias: acidic residues.

It belongs to the calsequestrin family. As to expression, skeletal and heart muscle.

It localises to the sarcoplasmic reticulum lumen. Functionally, calsequestrin is a high-capacity, moderate affinity, calcium-binding protein and thus acts as an internal calcium store in muscle. Calcium ions are bound by clusters of acidic residues at the protein surface, especially at the interface between subunits. Can bind around 60 Ca(2+) ions. Regulates the release of lumenal Ca(2+) via the calcium release channel RYR2; this plays an important role in triggering muscle contraction. Plays a role in excitation-contraction coupling in the heart and in regulating the rate of heart beats. In Gallus gallus (Chicken), this protein is Calsequestrin-2 (CASQ2).